The chain runs to 98 residues: Large ribosomal subunit protein uL23 (98 aa).

This sequence belongs to the universal ribosomal protein uL23 family. In terms of assembly, part of the 50S ribosomal subunit. Contacts protein L29, and trigger factor when it is bound to the ribosome.

In terms of biological role, one of the early assembly proteins it binds 23S rRNA. One of the proteins that surrounds the polypeptide exit tunnel on the outside of the ribosome. Forms the main docking site for trigger factor binding to the ribosome. In Hydrogenovibrio crunogenus (strain DSM 25203 / XCL-2) (Thiomicrospira crunogena), this protein is Large ribosomal subunit protein uL23.